The following is a 239-amino-acid chain: Sugar fermentation stimulation protein homolog (239 aa).

This sequence belongs to the SfsA family.

The sequence is that of Sugar fermentation stimulation protein homolog from Agrobacterium fabrum (strain C58 / ATCC 33970) (Agrobacterium tumefaciens (strain C58)).